A 239-amino-acid chain; its full sequence is Fatty acid metabolism regulator protein (239 aa).

The region spanning 6–74 is the HTH gntR-type domain; that stretch reads QSPAGFAEEY…HGKPTKINNF (69 aa). The segment at residues 34-53 is a DNA-binding region (H-T-H motif); that stretch reads ERELSELIGVTRTTLREVLQ.

As to quaternary structure, homodimer.

The protein resides in the cytoplasm. Multifunctional regulator of fatty acid metabolism. The chain is Fatty acid metabolism regulator protein from Pectobacterium carotovorum subsp. carotovorum (strain PC1).